The primary structure comprises 30 residues: Unknown protein from spot 365 of 2D-PAGE of etiolated coleoptile (30 aa).

This sequence belongs to the zinc-containing alcohol dehydrogenase family.

The chain is Unknown protein from spot 365 of 2D-PAGE of etiolated coleoptile from Zea mays (Maize).